The sequence spans 167 residues: Translation initiation factor IF-3 (167 aa).

This sequence belongs to the IF-3 family. Monomer.

It is found in the cytoplasm. Its function is as follows. IF-3 binds to the 30S ribosomal subunit and shifts the equilibrium between 70S ribosomes and their 50S and 30S subunits in favor of the free subunits, thus enhancing the availability of 30S subunits on which protein synthesis initiation begins. This is Translation initiation factor IF-3 from Bacillus cereus (strain ATCC 14579 / DSM 31 / CCUG 7414 / JCM 2152 / NBRC 15305 / NCIMB 9373 / NCTC 2599 / NRRL B-3711).